A 1364-amino-acid chain; its full sequence is Kinectin (1364 aa).

Residues 1–6 (MEFYES) lie on the Cytoplasmic side of the membrane. The chain crosses the membrane as a helical; Signal-anchor for type II membrane protein span at residues 7–29 (TYFIILIPSVVITVIFLFFWLFM). Residues 30–1364 (KETLYDEVLA…KGREHYQLVE (1335 aa)) lie on the Lumenal side of the membrane. 4 stretches are compositionally biased toward basic and acidic residues: residues 46–56 (KFPPTKSDKKK), 73–86 (HESD…DFKL), 121–135 (QKAA…ESEG), and 170–179 (QKNDDQDTKT). The disordered stretch occupies residues 46–207 (KFPPTKSDKK…VKQENVSGKK (162 aa)). Residues N202, N267, N623, N638, N704, N775, N976, N1061, N1088, and N1094 are each glycosylated (N-linked (GlcNAc...) asparagine). Residues 315–1085 (KASKAESAAA…VETRELLQKL (771 aa)) adopt a coiled-coil conformation. Positions 1116-1306 (SGSEDIKVME…ASLEREIGKV (191 aa)) form a coiled coil.

It belongs to the kinectin family. In terms of assembly, parallel homodimers formed between the membrane-bound and the cytosolic form, and also between 2 cytosolic forms. In terms of processing, both the membrane and cytoplasmic forms seem to be myristoylated.

The protein resides in the endoplasmic reticulum membrane. Functionally, receptor for kinesin thus involved in kinesin-driven vesicle motility. This is Kinectin (KTN1) from Gallus gallus (Chicken).